We begin with the raw amino-acid sequence, 758 residues long: Calpain (758 aa).

The Calpain catalytic domain occupies leucine 99 to glycine 397. Active-site residues include cysteine 154, histidine 313, and asparagine 337. The interval leucine 398 to glutamate 562 is domain III. The tract at residues aspartate 563–threonine 582 is linker. Residues leucine 583–tyrosine 757 are domain IV. Ca(2+)-binding residues include aspartate 641, asparagine 643, threonine 645, histidine 647, glutamate 652, aspartate 671, aspartate 673, serine 675, tyrosine 677, and glutamate 682. 2 consecutive EF-hand domains span residues isoleucine 658–histidine 693 and valine 694–alanine 729.

This sequence belongs to the peptidase C2 family.

Its activity is regulated as follows. Activated by free cytoplasmic calcium. Functionally, calpains are calcium-activated non-lysosomal thiol-proteases. This is Calpain from Schistosoma mansoni (Blood fluke).